A 381-amino-acid chain; its full sequence is Dual-specificity RNA methyltransferase RlmN (381 aa).

Glutamate 86 functions as the Proton acceptor in the catalytic mechanism. The 234-residue stretch at 105-338 (RHARYTICVS…CTIRQSKGLD (234 aa)) folds into the Radical SAM core domain. Cysteine 112 and cysteine 343 are joined by a disulfide. [4Fe-4S] cluster-binding residues include cysteine 119, cysteine 123, and cysteine 126. Residues 169–170 (GE), serine 201, 224–226 (SLH), and asparagine 300 contribute to the S-adenosyl-L-methionine site. Cysteine 343 (S-methylcysteine intermediate) is an active-site residue. The segment at 351 to 381 (ENPKFRANVSGNSAAKTEEKPTNDKTNVSKK) is disordered.

Belongs to the radical SAM superfamily. RlmN family. [4Fe-4S] cluster is required as a cofactor.

It is found in the cytoplasm. It carries out the reaction adenosine(2503) in 23S rRNA + 2 reduced [2Fe-2S]-[ferredoxin] + 2 S-adenosyl-L-methionine = 2-methyladenosine(2503) in 23S rRNA + 5'-deoxyadenosine + L-methionine + 2 oxidized [2Fe-2S]-[ferredoxin] + S-adenosyl-L-homocysteine. The enzyme catalyses adenosine(37) in tRNA + 2 reduced [2Fe-2S]-[ferredoxin] + 2 S-adenosyl-L-methionine = 2-methyladenosine(37) in tRNA + 5'-deoxyadenosine + L-methionine + 2 oxidized [2Fe-2S]-[ferredoxin] + S-adenosyl-L-homocysteine. In terms of biological role, specifically methylates position 2 of adenine 2503 in 23S rRNA and position 2 of adenine 37 in tRNAs. m2A2503 modification seems to play a crucial role in the proofreading step occurring at the peptidyl transferase center and thus would serve to optimize ribosomal fidelity. In Campylobacter concisus (strain 13826), this protein is Dual-specificity RNA methyltransferase RlmN.